The following is a 110-amino-acid chain: Iron-sulfur cluster assembly protein CyaY (110 aa).

The protein belongs to the frataxin family.

In terms of biological role, involved in iron-sulfur (Fe-S) cluster assembly. May act as a regulator of Fe-S biogenesis. This Azotobacter vinelandii (strain DJ / ATCC BAA-1303) protein is Iron-sulfur cluster assembly protein CyaY.